A 102-amino-acid polypeptide reads, in one-letter code: MILLKSEHGGKRKEMRQDDLMGPNHFSLRIMYKIIIYTYPVSLYAVKELNLSKTFSISALGILNSNSNRSPAKKQTFFSACVAKSYSSFFISICILDLASHL.

Residues 77-96 (FFSACVAKSYSSFFISICIL) form a helical membrane-spanning segment.

It localises to the membrane. This is an uncharacterized protein from Saccharomyces cerevisiae (strain ATCC 204508 / S288c) (Baker's yeast).